The chain runs to 371 residues: Macronuclear solute carrier homolog CR-MSC (371 aa).

Solcar repeat units lie at residues 16-111, 120-208, and 215-304; these read RMNY…FYDK, ARPD…CKEN, and PHWI…LSQF. Helical transmembrane passes span 22-42, 89-109, 126-146, 184-204, 221-241, and 281-301; these read FAAA…LDMV, TFFF…GYFY, VAAG…IDIV, AGAN…IYDW, LWGT…FDMI, and FGSF…ICYL.

The protein belongs to the mitochondrial carrier (TC 2.A.29) family.

The protein resides in the membrane. This is Macronuclear solute carrier homolog CR-MSC from Oxytricha trifallax (Sterkiella histriomuscorum).